A 238-amino-acid polypeptide reads, in one-letter code: MLTEGLSIDAKGGGRFGAHLQLPARGRGPVVMVAQEIFGVNPFMTEVLAWLASEGFVGLCPDLYWRHGPGIEFDPNDEVQRARALGMFRDYKLEDGVADLRATVAYAASQPFCDGGVAVIGYCLGGALAYEVAAEGFAQCCVGYYGVGFEKRLERARLVKTPSMFHMGTNDHFVTAEARQLITNAFEANPAIALHWYDAGHSFARASSPNFSPEATRTANARTLEMLKRMKPIGTIGQ.

Catalysis depends on residues cysteine 123, aspartate 171, and histidine 201.

It belongs to the dienelactone hydrolase family. In terms of assembly, monomer.

It carries out the reaction 2-(5-oxo-2,5-dihydrofuran-2-ylidene)acetate + H2O = 4-oxohex-2-enedioate + H(+). The protein operates within aromatic compound metabolism; 3-chlorocatechol degradation. In terms of biological role, ring cleavage of cyclic ester dienelactone to produce maleylacetate. In Pseudomonas sp. (strain P51), this protein is Carboxymethylenebutenolidase (tcbE).